The sequence spans 354 residues: 5,10-methenyltetrahydromethanopterin hydrogenase (354 aa).

The protein belongs to the HMD family.

It catalyses the reaction 5,10-methenyl-5,6,7,8-tetrahydromethanopterin + H2 = 5,10-methylenetetrahydromethanopterin + H(+). Its pathway is one-carbon metabolism; methanogenesis from CO(2); 5,10-methylene-5,6,7,8-tetrahydromethanopterin from 5,10-methenyl-5,6,7,8-tetrahydromethanopterin (hydrogen route): step 1/1. Functionally, catalyzes the reversible reduction of methenyl-H(4)MPT(+) to methylene-H(4)MPT. The sequence is that of 5,10-methenyltetrahydromethanopterin hydrogenase from Methanococcus maripaludis (strain C7 / ATCC BAA-1331).